The following is a 280-amino-acid chain: Dehydrogenase/reductase SDR family member 2, mitochondrial (280 aa).

The N-terminal 23 residues, 1–23 (MLSAVARGYQGWFHPCARLSVRM), are a transit peptide targeting the mitochondrion. NAD(+) is bound by residues serine 46 and isoleucine 48. Lysine 96 carries the post-translational modification N6-acetyllysine; alternate. Residue lysine 96 is modified to N6-succinyllysine; alternate. Serine 172 contacts substrate. Residues tyrosine 185 and lysine 189 each coordinate NAD(+). The active-site Proton acceptor is tyrosine 185. N6-acetyllysine; alternate is present on lysine 219. Position 219 is an N6-succinyllysine; alternate (lysine 219). Threonine 220 contacts NAD(+). Serine 223 carries the phosphoserine modification. Lysine 237 is subject to N6-succinyllysine.

The protein belongs to the short-chain dehydrogenases/reductases (SDR) family. As to quaternary structure, directly interacts with MDM2; this interaction occurs in the nucleus and does not target DHRS2 to degradation. As to expression, widely expressed, with highest levels in liver and kidney, followed by heart, spleen, skeletal muscle and placenta. In hemopoietic cells, expressed in dendritic cells, but not in monocytes, macrophages, granulocytes, nor in B and T lymphocytes.

The protein resides in the mitochondrion matrix. It localises to the nucleus. Its function is as follows. NADPH-dependent oxidoreductase which catalyzes the reduction of dicarbonyl compounds. Displays reductase activity in vitro with 3,4-hexanedione, 2,3-heptanedione and 1-phenyl-1,2-propanedione as substrates. May function as a dicarbonyl reductase in the enzymatic inactivation of reactive carbonyls involved in covalent modification of cellular components. Also displays a minor hydroxysteroid dehydrogenase activity toward bile acids such as ursodeoxycholic acid (UDCA) and isoursodeoxycholic acid (isoUDCA), which makes it unlikely to control hormone levels. Doesn't show any activity in vitro with retinoids and sugars as substrates. Attenuates MDM2-mediated p53/TP53 degradation, leading to p53/TP53 stabilization and increased transcription activity, resulting in the accumulation of MDM2 and CDKN1A/p21. Reduces proliferation, migration and invasion of cancer cells and well as the production of ROS in cancer. The protein is Dehydrogenase/reductase SDR family member 2, mitochondrial of Homo sapiens (Human).